The sequence spans 1020 residues: MRRFLRPGHDPVRERLKRDLFQFNKTVEHGFPHQPSALGYSPSLRILAIGTRSGAIKLYGAPGVEFMGLHQENNAVTQIHLLPGQCQLVTLLDDNSLHLWSLKVKGGASELQEDESFTLRGPPGAAPSATQITVVLPHSSCELLYLGTESGNVFVVQLPAFRALEDRTISSDAVLQRLPEEARHRRVFEMVEALQEHPRDPNQILIGYSRGLVVIWDLQGSRVLYHFLSSQQLENIWWQRDGRLLVSCHSDGSYCQWPVSSEAQQPEPLRSLVPYGPFPCKAITRILWLTTRQGLPFTIFQGGMPRASYGDRHCISVIHDGQQTAFDFTSRVIGFTVLTEADPAATFDDPYALVVLAEEELVVIDLQTAGWPPVQLPYLASLHCSAITCSHHVSNIPLKLWERIIAAGSRQNAHFSTMEWPIDGGTSLTPAPPQRDLLLTGHEDGTVRFWDASGVCLRLLYKLSTVRVFLTDTDPNENFSAQGEDEWPPLRKVGSFDPYSDDPRLGIQKIFLCKYSGYLAVAGTAGQVLVLELNDEAAEQAVEQVEADLLQDQEGYRWKGHERLAARSGPVRFEPGFQPFVLVQCQPPAVVTSLALHSEWRLVAFGTSHGFGLFDHQQRRQVFVKCTLHPSDQLALEGPLSRVKSLKKSLRQSFRRMRRSRVSSRKRHPAGPPGEAQEGSAKAERPGLQNMELAPVQRKIEARSAEDSFTGFVRTLYFADTYLKDSSRHCPSLWAGTNGGTIYAFSLRVPPAERRMDEPVRAEQAKEIQLMHRAPVVGILVLDGHSVPLPEPLEVAHDLSKSPDMQGSHQLLVVSEEQFKVFTLPKVSAKLKLKLTALEGSRVRRVSVAHFGSRRAEDYGEHHLAVLTNLGDIQVVSLPLLKPQVRYSCIRREDVSGIASCVFTKYGQGFYLISPSEFERFSLSTKWLVEPRCLVDSAETKNHRPGNGAGPKKAPSRARNSGTQSDGEEKQPGLVMERALLSDERVLKEIQSTLEGDRGSGNWRSHRAAVGCSLSNGGAE.

WD repeat units follow at residues 36–69, 76–117, 132–169, 193–227, 233–268, 282–324, 332–366, 388–464, 508–583, 592–653, 713–769, 778–830, 835–888, and 902–925; these read SALGYSPSLRILAIGTRSGAIKLYGAPGVEFMGL, VTQI…DESF, ITVVLPHSSCELLYLGTESGNVFVVQLPAFRALEDRTI, ALQEHPRDPNQILIGYSRGLVVIWDLQGSRVLYHF, LENIWWQRDGRLLVSCHSDGSYCQWPVSSEAQQPEP, AITR…GQQT, VIGFTVLTEADPAATFDDPYALVVLAEEELVVIDL, TCSH…YKLS, QKIF…FVLV, TSLA…LRQS, VRTL…KEIQ, GILV…VSAK, LTAL…VRYS, and VFTKYGQGFYLISPSEFERFSLST. A Phosphoserine modification is found at Ser-653. A compositionally biased stretch (basic residues) spans 653 to 669; the sequence is SFRRMRRSRVSSRKRHP. A disordered region spans residues 653 to 689; the sequence is SFRRMRRSRVSSRKRHPAGPPGEAQEGSAKAERPGLQ. Disordered regions lie at residues 938 to 975 and 992 to 1020; these read AETKNHRPGNGAGPKKAPSRARNSGTQSDGEEKQPGLV and STLEGDRGSGNWRSHRAAVGCSLSNGGAE. Ser-965 and Ser-1015 each carry phosphoserine.

Belongs to the WD repeat L(2)GL family. In terms of assembly, interacts with GPSM2/LGN, PRKCI/aPKC and PARD6B/Par-6. The complex is enhanced during mitosis. Interacts with DCAF1. In terms of processing, phosphorylated at Ser-653 by PRKCI. Phosphorylation is enhanced during cell polarization induced by calcium. Phosphorylation may occur during the cell-cell contact-induced cell polarization and may contribute to the segregation of LLGL2 from the PRKCI/aPKC and PARD6B/Par-6 complex.

It is found in the cytoplasm. Its function is as follows. Part of a complex with GPSM2/LGN, PRKCI/aPKC and PARD6B/Par-6, which may ensure the correct organization and orientation of bipolar spindles for normal cell division. This complex plays roles in the initial phase of the establishment of epithelial cell polarity. In Homo sapiens (Human), this protein is LLGL scribble cell polarity complex component 2 (LLGL2).